Here is a 120-residue protein sequence, read N- to C-terminus: Large ribosomal subunit protein bL19 (120 aa).

This sequence belongs to the bacterial ribosomal protein bL19 family.

Functionally, this protein is located at the 30S-50S ribosomal subunit interface and may play a role in the structure and function of the aminoacyl-tRNA binding site. The chain is Large ribosomal subunit protein bL19 from Nostoc punctiforme (strain ATCC 29133 / PCC 73102).